The sequence spans 183 residues: Large ribosomal subunit protein uL6 (183 aa).

This sequence belongs to the universal ribosomal protein uL6 family. In terms of assembly, part of the 50S ribosomal subunit.

Functionally, this protein binds to the 23S rRNA, and is important in its secondary structure. It is located near the subunit interface in the base of the L7/L12 stalk, and near the tRNA binding site of the peptidyltransferase center. In Moorella thermoacetica (strain ATCC 39073 / JCM 9320), this protein is Large ribosomal subunit protein uL6.